Reading from the N-terminus, the 515-residue chain is 1-pyrroline-5-carboxylate dehydrogenase (515 aa).

Residues glutamate 286 and cysteine 320 contribute to the active site.

This sequence belongs to the aldehyde dehydrogenase family. RocA subfamily.

The catalysed reaction is L-glutamate 5-semialdehyde + NAD(+) + H2O = L-glutamate + NADH + 2 H(+). It functions in the pathway amino-acid degradation; L-proline degradation into L-glutamate; L-glutamate from L-proline: step 2/2. The sequence is that of 1-pyrroline-5-carboxylate dehydrogenase from Geobacillus sp. (strain WCH70).